A 296-amino-acid polypeptide reads, in one-letter code: Polyamine aminopropyltransferase (296 aa).

The 236-residue stretch at 16-251 (HLWYFEYYTG…GMWSYTFASK (236 aa)) folds into the PABS domain. Gln-46 is a binding site for S-methyl-5'-thioadenosine. Spermidine-binding residues include His-77 and Asp-101. S-methyl-5'-thioadenosine contacts are provided by residues Glu-121 and 152–153 (NG). The active-site Proton acceptor is the Asp-170. 170–173 (DSTD) contacts spermidine.

This sequence belongs to the spermidine/spermine synthase family. Homodimer or homotetramer.

The protein localises to the cytoplasm. The enzyme catalyses S-adenosyl 3-(methylsulfanyl)propylamine + putrescine = S-methyl-5'-thioadenosine + spermidine + H(+). It participates in amine and polyamine biosynthesis; spermidine biosynthesis; spermidine from putrescine: step 1/1. Its function is as follows. Catalyzes the irreversible transfer of a propylamine group from the amino donor S-adenosylmethioninamine (decarboxy-AdoMet) to putrescine (1,4-diaminobutane) to yield spermidine. In Thermotoga petrophila (strain ATCC BAA-488 / DSM 13995 / JCM 10881 / RKU-1), this protein is Polyamine aminopropyltransferase.